Here is a 343-residue protein sequence, read N- to C-terminus: Holliday junction branch migration complex subunit RuvB (343 aa).

The segment at 1-182 (MRDELLNTPT…FGISNRLDYY (182 aa)) is large ATPase domain (RuvB-L). ATP-binding positions include I21, R22, G63, K66, T67, T68, 129–131 (EDF), R172, Y182, and R219. Mg(2+) is bound at residue T67. Residues 183–253 (SAELLQRIII…LARKTLAALE (71 aa)) are small ATPAse domain (RuvB-S). The head domain (RuvB-H) stretch occupies residues 256 to 343 (EDGLDDMDKK…DGPLFQKGSS (88 aa)). Residues R311 and R316 each coordinate DNA.

Belongs to the RuvB family. Homohexamer. Forms an RuvA(8)-RuvB(12)-Holliday junction (HJ) complex. HJ DNA is sandwiched between 2 RuvA tetramers; dsDNA enters through RuvA and exits via RuvB. An RuvB hexamer assembles on each DNA strand where it exits the tetramer. Each RuvB hexamer is contacted by two RuvA subunits (via domain III) on 2 adjacent RuvB subunits; this complex drives branch migration. In the full resolvosome a probable DNA-RuvA(4)-RuvB(12)-RuvC(2) complex forms which resolves the HJ.

Its subcellular location is the cytoplasm. It catalyses the reaction ATP + H2O = ADP + phosphate + H(+). Its function is as follows. The RuvA-RuvB-RuvC complex processes Holliday junction (HJ) DNA during genetic recombination and DNA repair, while the RuvA-RuvB complex plays an important role in the rescue of blocked DNA replication forks via replication fork reversal (RFR). RuvA specifically binds to HJ cruciform DNA, conferring on it an open structure. The RuvB hexamer acts as an ATP-dependent pump, pulling dsDNA into and through the RuvAB complex. RuvB forms 2 homohexamers on either side of HJ DNA bound by 1 or 2 RuvA tetramers; 4 subunits per hexamer contact DNA at a time. Coordinated motions by a converter formed by DNA-disengaged RuvB subunits stimulates ATP hydrolysis and nucleotide exchange. Immobilization of the converter enables RuvB to convert the ATP-contained energy into a lever motion, pulling 2 nucleotides of DNA out of the RuvA tetramer per ATP hydrolyzed, thus driving DNA branch migration. The RuvB motors rotate together with the DNA substrate, which together with the progressing nucleotide cycle form the mechanistic basis for DNA recombination by continuous HJ branch migration. Branch migration allows RuvC to scan DNA until it finds its consensus sequence, where it cleaves and resolves cruciform DNA. In Prosthecochloris aestuarii (strain DSM 271 / SK 413), this protein is Holliday junction branch migration complex subunit RuvB.